Reading from the N-terminus, the 405-residue chain is Endo-1,4-beta-xylanase 5 (405 aa).

The signal sequence occupies residues 1-22 (MTRLATLITLAGLLAVSPGAYA). N-linked (GlcNAc...) asparagine glycosylation is found at N27 and N69. A GH10 domain is found at 32 to 352 (STGAEGLNSL…KPAYTSVSSL (321 aa)). E166 serves as the catalytic Proton donor. N171 carries an N-linked (GlcNAc...) asparagine glycan. Catalysis depends on E273, which acts as the Nucleophile. C302 and C308 are joined by a disulfide. A lipid anchor (GPI-anchor amidated glycine) is attached at G380. Residues 381-405 (AGRETVSIAGLTLALSSLAFGMFML) constitute a propeptide, removed in mature form.

Belongs to the glycosyl hydrolase 10 (cellulase F) family.

It is found in the cell membrane. Its subcellular location is the secreted. The enzyme catalyses Endohydrolysis of (1-&gt;4)-beta-D-xylosidic linkages in xylans.. It functions in the pathway glycan degradation; xylan degradation. Functionally, endo-1,4-beta-xylanase involved in the hydrolysis of xylan, a major structural heterogeneous polysaccharide found in plant biomass representing the second most abundant polysaccharide in the biosphere, after cellulose. This Pyricularia grisea (Crabgrass-specific blast fungus) protein is Endo-1,4-beta-xylanase 5 (XYL5).